The following is a 59-amino-acid chain: Large ribosomal subunit protein uL30 (59 aa).

This sequence belongs to the universal ribosomal protein uL30 family. As to quaternary structure, part of the 50S ribosomal subunit.

The chain is Large ribosomal subunit protein uL30 from Macrococcus caseolyticus (strain JCSC5402) (Macrococcoides caseolyticum).